The primary structure comprises 440 residues: Ribosomal protein uS12 methylthiotransferase RimO (440 aa).

Positions 6 to 116 (PKVGFVSLGC…VVTAVHEVVP (111 aa)) constitute an MTTase N-terminal domain. [4Fe-4S] cluster-binding residues include C15, C51, C80, C149, C153, and C156. Residues 135–373 (LTPRHYAYLK…MAHQQAISAA (239 aa)) enclose the Radical SAM core domain. One can recognise a TRAM domain in the interval 376–440 (QLKVGKEIEV…DEYDLWAELV (65 aa)).

Belongs to the methylthiotransferase family. RimO subfamily. [4Fe-4S] cluster is required as a cofactor.

The protein localises to the cytoplasm. The enzyme catalyses L-aspartate(89)-[ribosomal protein uS12]-hydrogen + (sulfur carrier)-SH + AH2 + 2 S-adenosyl-L-methionine = 3-methylsulfanyl-L-aspartate(89)-[ribosomal protein uS12]-hydrogen + (sulfur carrier)-H + 5'-deoxyadenosine + L-methionine + A + S-adenosyl-L-homocysteine + 2 H(+). Catalyzes the methylthiolation of an aspartic acid residue of ribosomal protein uS12. This is Ribosomal protein uS12 methylthiotransferase RimO from Pseudomonas aeruginosa (strain ATCC 15692 / DSM 22644 / CIP 104116 / JCM 14847 / LMG 12228 / 1C / PRS 101 / PAO1).